The sequence spans 370 residues: Phospho-2-dehydro-3-deoxyheptonate aldolase, phenylalanine-inhibited (370 aa).

The protein belongs to the class-I DAHP synthase family.

It carries out the reaction D-erythrose 4-phosphate + phosphoenolpyruvate + H2O = 7-phospho-2-dehydro-3-deoxy-D-arabino-heptonate + phosphate. It functions in the pathway metabolic intermediate biosynthesis; chorismate biosynthesis; chorismate from D-erythrose 4-phosphate and phosphoenolpyruvate: step 1/7. With respect to regulation, inhibited by phenyalanine. Functionally, stereospecific condensation of phosphoenolpyruvate (PEP) and D-erythrose-4-phosphate (E4P) giving rise to 3-deoxy-D-arabino-heptulosonate-7-phosphate (DAHP). In Saccharomyces cerevisiae (strain ATCC 204508 / S288c) (Baker's yeast), this protein is Phospho-2-dehydro-3-deoxyheptonate aldolase, phenylalanine-inhibited (ARO3).